The chain runs to 525 residues: 2,3-bisphosphoglycerate-independent phosphoglycerate mutase (525 aa).

Mn(2+)-binding residues include aspartate 18 and serine 68. Serine 68 (phosphoserine intermediate) is an active-site residue. Substrate-binding positions include histidine 129, 159-160 (RD), arginine 194, arginine 200, 269-272 (RADR), and lysine 345. Mn(2+) contacts are provided by aspartate 413, histidine 417, aspartate 454, histidine 455, and histidine 473.

This sequence belongs to the BPG-independent phosphoglycerate mutase family. In terms of assembly, monomer. Mn(2+) is required as a cofactor.

The enzyme catalyses (2R)-2-phosphoglycerate = (2R)-3-phosphoglycerate. It participates in carbohydrate degradation; glycolysis; pyruvate from D-glyceraldehyde 3-phosphate: step 3/5. In terms of biological role, catalyzes the interconversion of 2-phosphoglycerate and 3-phosphoglycerate. The sequence is that of 2,3-bisphosphoglycerate-independent phosphoglycerate mutase from Chromohalobacter salexigens (strain ATCC BAA-138 / DSM 3043 / CIP 106854 / NCIMB 13768 / 1H11).